The chain runs to 712 residues: DNA ligase (712 aa).

NAD(+)-binding positions include 53-57 (DAEFD), 103-104 (SL), and E133. Catalysis depends on K135, which acts as the N6-AMP-lysine intermediate. NAD(+)-binding residues include R156, E196, K315, and K339. Zn(2+)-binding residues include C433, C436, C452, and C458. Positions 622–711 (SIERTLEGLS…PERDAEDGEP (90 aa)) constitute a BRCT domain.

The protein belongs to the NAD-dependent DNA ligase family. LigA subfamily. The cofactor is Mg(2+). Requires Mn(2+) as cofactor.

The catalysed reaction is NAD(+) + (deoxyribonucleotide)n-3'-hydroxyl + 5'-phospho-(deoxyribonucleotide)m = (deoxyribonucleotide)n+m + AMP + beta-nicotinamide D-nucleotide.. DNA ligase that catalyzes the formation of phosphodiester linkages between 5'-phosphoryl and 3'-hydroxyl groups in double-stranded DNA using NAD as a coenzyme and as the energy source for the reaction. It is essential for DNA replication and repair of damaged DNA. This is DNA ligase from Mycolicibacterium gilvum (strain PYR-GCK) (Mycobacterium gilvum (strain PYR-GCK)).